A 151-amino-acid polypeptide reads, in one-letter code: Large ribosomal subunit protein bL9 (151 aa).

This sequence belongs to the bacterial ribosomal protein bL9 family.

Functionally, binds to the 23S rRNA. The polypeptide is Large ribosomal subunit protein bL9 (Chloroherpeton thalassium (strain ATCC 35110 / GB-78)).